Consider the following 331-residue polypeptide: DNA-directed RNA polymerase subunit alpha (331 aa).

The interval 1 to 230 (MKNIKTSPYI…KQMSVFNSEW (230 aa)) is alpha N-terminal domain (alpha-NTD). The segment at 247 to 331 (LKPLLQKIEA…ALQKRLNKLK (85 aa)) is alpha C-terminal domain (alpha-CTD).

This sequence belongs to the RNA polymerase alpha chain family. Homodimer. The RNAP catalytic core consists of 2 alpha, 1 beta/beta' and 1 omega subunit. When a sigma factor is associated with the core the holoenzyme is formed, which can initiate transcription.

It catalyses the reaction RNA(n) + a ribonucleoside 5'-triphosphate = RNA(n+1) + diphosphate. Its function is as follows. DNA-dependent RNA polymerase catalyzes the transcription of DNA into RNA using the four ribonucleoside triphosphates as substrates. This is DNA-directed RNA polymerase subunit alpha from Wolinella succinogenes (strain ATCC 29543 / DSM 1740 / CCUG 13145 / JCM 31913 / LMG 7466 / NCTC 11488 / FDC 602W) (Vibrio succinogenes).